The sequence spans 1163 residues: MFLMNAPPVVALQSRWEAFGQPRSFCLPDCFSEAKEDGSRASVSARVQMLISTLQRDEAALGMGHERLTQRGQRAERSRDTRLAPKPAVCKEQPEFPARGLVANCSALEKDEAGRRSPLELDSDSDDSVDRDIEEAIQEYLKARGGASEPMSQGAPSIPEPAHSSTLPIPCPSQLTPGSGSVPVGASEDQGSTSPASMSSEDSFEQSIRAEIEQFLNEKRQHENPKCDGFVDKKSDPNNSPARLRGNRETSARAALMGTCKEFIFRKPPRLTKMSTQQRNFQPKPTTEPETPVSTKLTAHRPEAAQSRGGVRRSMPARRSKRIRSSAPVHQASDSSSDDGIEEAIQLYQLEKTRKEASGDPPLRGQLKEESPGSAQPNALPEAHRRPPSKKKLAVPKVIDTTQGVLHPDPLSRLLTDSRASLPPGHAAAKSEAVCQASRLADTSTELMCAEAILDISKTILPAPMEGSDRPPSRNPLFCPQPMPPRSEGDSSNIDSDDSIEQEIRTFLALKAQVGSPQPAQGPLSSPGPSGQPGIPKVPFAKTLDLPLVCKRKRRGGGGSTTMPKKIREGRESTQDADHIQGKAQPGHDGWDPLGHNKITETPGGEAEAKEQPVISRTVGLSDTHLPQGALGKATEKESSEDKSSSLDSDEDLDMAIKDLLRSKRKFKKRCRDPRASCKKVRFGSTETRCGEKPSNLPGDWKDHRQQALRSCLPKCRGDNKDGPGRSPGSSVAEKAKMGGTGGEDATPAFLLRRKSPEGALPSTDTGASGHPPSASSPTSEDSAVDSDDSIELEIRRFLAEKAKESIRNTEPQGGPAKPEMPCRKDPTLGLQPGVCTRSQKARGTPQLAEGRRGPERARTQATGLLSQSGKGTLRAEQTARLTTALGRSEPALPKNTCRNSSAKASPPSRKSAHVHKDHSPQGSQTATAESVFGQLPSCAKVGAEAGSAGGTFHLNYGSQNLLTPNPGSQADLVLPWSDFAHQSRLSSPWVLNSGQGTVWTGVFRGEKEKGATSQAGAPPSLSSGPRKGLPFLSTQLFHFGKNVSWGGKQTSLFSPNLGLPLQAPAFSAFRETQPGHNPVFGSPHLLMKDSGNWPSRKAQGTLRQQDRRNSASEDKVLDLRYRHRVDREPQDQETLGSDASEFSDTSMEDGGSATVSSKGLKL.

Positions 65–83 (HERLTQRGQRAERSRDTRL) are enriched in basic and acidic residues. Disordered stretches follow at residues 65 to 91 (HERL…AVCK), 144 to 253 (RGGA…TSAR), 266 to 393 (RKPP…KKKL), 463 to 496 (APME…NIDS), 514 to 653 (VGSP…DEDL), 672 to 929 (RDPR…TATA), and 1073 to 1163 (TQPG…GLKL). 2 stretches are compositionally biased toward polar residues: residues 163–179 (HSST…TPGS) and 189–201 (DQGS…MSSE). Basic and acidic residues predominate over residues 208–236 (IRAEIEQFLNEKRQHENPKCDGFVDKKSD). The segment covering 273 to 297 (KMSTQQRNFQPKPTTEPETPVSTKL) has biased composition (polar residues). Residues 315 to 324 (MPARRSKRIR) show a composition bias toward basic residues. Positions 515–535 (GSPQPAQGPLSSPGPSGQPGI) are enriched in low complexity. Composition is skewed to basic and acidic residues over residues 566–581 (KIRE…DHIQ) and 634–645 (ATEKESSEDKSS). The segment covering 672 to 682 (RDPRASCKKVR) has biased composition (basic residues). Residues 766–780 (TGASGHPPSASSPTS) are compositionally biased toward low complexity. Residues 783–792 (SAVDSDDSIE) show a composition bias toward acidic residues. 2 stretches are compositionally biased toward basic and acidic residues: residues 793–808 (LEIR…ESIR) and 850–859 (EGRRGPERAR). The span at 860–871 (TQATGLLSQSGK) shows a compositional bias: polar residues. Positions 901-910 (SSAKASPPSR) are enriched in low complexity. Over residues 1105 to 1131 (QQDRRNSASEDKVLDLRYRHRVDREPQ) the composition is skewed to basic and acidic residues. Serine 1111 bears the Phosphoserine mark. Polar residues-rich tracts occupy residues 1133–1146 (QETL…FSDT) and 1154–1163 (ATVSSKGLKL).

In terms of assembly, interacts with UTP20 and PPP1CA.

Its subcellular location is the nucleus. It is found in the nucleolus. In terms of biological role, inhibits phosphatase activity of protein phosphatase 1 (PP1) complexes. May positively regulate cell proliferation. The polypeptide is Protein phosphatase 1 regulatory subunit 26 (Ppp1r26) (Mus musculus (Mouse)).